Here is a 209-residue protein sequence, read N- to C-terminus: Thymidylate kinase (209 aa).

10–17 (GIDGCGKS) provides a ligand contact to ATP.

The protein belongs to the thymidylate kinase family.

The enzyme catalyses dTMP + ATP = dTDP + ADP. Its function is as follows. Phosphorylation of dTMP to form dTDP in both de novo and salvage pathways of dTTP synthesis. In Synechococcus sp. (strain CC9902), this protein is Thymidylate kinase.